Consider the following 427-residue polypeptide: Tol-Pal system protein TolB (427 aa).

Residues 1 to 23 form the signal peptide; that stretch reads MKLLKRLVSVFAIVLAVGSNAFA.

This sequence belongs to the TolB family. In terms of assembly, the Tol-Pal system is composed of five core proteins: the inner membrane proteins TolA, TolQ and TolR, the periplasmic protein TolB and the outer membrane protein Pal. They form a network linking the inner and outer membranes and the peptidoglycan layer.

The protein localises to the periplasm. In terms of biological role, part of the Tol-Pal system, which plays a role in outer membrane invagination during cell division and is important for maintaining outer membrane integrity. In Haemophilus influenzae (strain 86-028NP), this protein is Tol-Pal system protein TolB.